The sequence spans 695 residues: MLMAKPDVPSSILPRSSSILPNSIETLDENESIEAQVNNVQSLALSSPNRDRSDDDDNNNNHDSVSIPPPIYDGYSSSSSDESQSVPSPPINLDHDDDECQIPIRNTSQALDDIDDDIWGDDDLPETRRPWTPNVSPGFGSDDDDDNDDDNSKNEPRKSLFYGFRQEPEPVTGVGAGLWNLGNSCFLNSVFQCFTHTVPLIESLLSFRYEVPCHCGNEFFCVIRAIRYHIEAALRPERCPIAPYFFFDNLNYFSPDFQRYQQEDAHEFLQAFLEKLEICGSDRTSFRGDITSQDVFSGRLISGLRCCNCDYVSETYEKSVGLSLEIEDVDTLGSALESFTRVEKLDEQLTCDNCNEKVSKEKQLLLDKLPLVATFHLKRFKNNGLYMEKIYKHVKIPLEIDLQPYMRNIQENEVSTKYHLYALVEHFGYSVAYGHYSSYVRSAPKIWHHFDDSKVTRIDEDMVLSQDSYILFYAREGTRWFSSVYEEMQPLVEASLLNSSPKSVLDSSTNGECLSEISYENGDKASKPCDSAGVCNQHVKTKEDFVSLSNDDVFLSAESSSGEESPMGELLDPLDPDDSYSPCTEKESDSCLAIERATIRDDFFPLLLDQNQESSTSSPKLQERTFEMQLLQMEETTKSQEPWKQPLSSISNIADSMEAEFVYGDLMKKPSPRARELLDQAISTNGSPPKKLKTT.

Disordered stretches follow at residues 1–20 (MLMA…SSIL) and 42–162 (SLAL…SLFY). 2 stretches are compositionally biased toward low complexity: residues 9–20 (PSSILPRSSSIL) and 61–86 (NHDS…SQSV). The span at 112–124 (DDIDDDIWGDDDL) shows a compositional bias: acidic residues. In terms of domain architecture, USP spans 176–476 (AGLWNLGNSC…DSYILFYARE (301 aa)). The active-site Nucleophile is C185. Residue H435 is the Proton acceptor of the active site. Low complexity predominate over residues 556–571 (SAESSSGEESPMGELL). Disordered stretches follow at residues 556 to 585 (SAES…PCTE) and 674 to 695 (AREL…LKTT).

The protein belongs to the peptidase C19 family.

It carries out the reaction Thiol-dependent hydrolysis of ester, thioester, amide, peptide and isopeptide bonds formed by the C-terminal Gly of ubiquitin (a 76-residue protein attached to proteins as an intracellular targeting signal).. Recognizes and hydrolyzes the peptide bond at the C-terminal Gly of ubiquitin. Involved in the processing of poly-ubiquitin precursors as well as that of ubiquitinated proteins. This is Ubiquitin carboxyl-terminal hydrolase 20 (UBP20) from Arabidopsis thaliana (Mouse-ear cress).